The primary structure comprises 620 residues: Putative ribonuclease H protein At1g65750 (620 aa).

The RNase H type-1 domain maps to 456–586 (CVGWVKVNTD…ADGLANYAFS (131 aa)). Mg(2+) is bound by residues Asp465, Glu505, Asp529, and Asp578.

It depends on Mg(2+) as a cofactor.

It catalyses the reaction Endonucleolytic cleavage to 5'-phosphomonoester.. The chain is Putative ribonuclease H protein At1g65750 from Arabidopsis thaliana (Mouse-ear cress).